The primary structure comprises 217 residues: Thiamine-phosphate synthase (217 aa).

4-amino-2-methyl-5-(diphosphooxymethyl)pyrimidine contacts are provided by residues 42–46 (QYRDK) and aspartate 77. Mg(2+)-binding residues include aspartate 78 and aspartate 97. Serine 116 contacts 4-amino-2-methyl-5-(diphosphooxymethyl)pyrimidine. 143-145 (TTS) contacts 2-[(2R,5Z)-2-carboxy-4-methylthiazol-5(2H)-ylidene]ethyl phosphate. Lysine 146 contributes to the 4-amino-2-methyl-5-(diphosphooxymethyl)pyrimidine binding site. 2-[(2R,5Z)-2-carboxy-4-methylthiazol-5(2H)-ylidene]ethyl phosphate is bound by residues glycine 174 and 194–195 (IS).

It belongs to the thiamine-phosphate synthase family. The cofactor is Mg(2+).

It carries out the reaction 2-[(2R,5Z)-2-carboxy-4-methylthiazol-5(2H)-ylidene]ethyl phosphate + 4-amino-2-methyl-5-(diphosphooxymethyl)pyrimidine + 2 H(+) = thiamine phosphate + CO2 + diphosphate. It catalyses the reaction 2-(2-carboxy-4-methylthiazol-5-yl)ethyl phosphate + 4-amino-2-methyl-5-(diphosphooxymethyl)pyrimidine + 2 H(+) = thiamine phosphate + CO2 + diphosphate. The catalysed reaction is 4-methyl-5-(2-phosphooxyethyl)-thiazole + 4-amino-2-methyl-5-(diphosphooxymethyl)pyrimidine + H(+) = thiamine phosphate + diphosphate. Its pathway is cofactor biosynthesis; thiamine diphosphate biosynthesis; thiamine phosphate from 4-amino-2-methyl-5-diphosphomethylpyrimidine and 4-methyl-5-(2-phosphoethyl)-thiazole: step 1/1. In terms of biological role, condenses 4-methyl-5-(beta-hydroxyethyl)thiazole monophosphate (THZ-P) and 2-methyl-4-amino-5-hydroxymethyl pyrimidine pyrophosphate (HMP-PP) to form thiamine monophosphate (TMP). This chain is Thiamine-phosphate synthase, found in Lactiplantibacillus plantarum (strain ATCC BAA-793 / NCIMB 8826 / WCFS1) (Lactobacillus plantarum).